The following is a 91-amino-acid chain: DNA-directed RNA polymerase subunit omega (91 aa).

Belongs to the RNA polymerase subunit omega family. The RNAP catalytic core consists of 2 alpha, 1 beta, 1 beta' and 1 omega subunit. When a sigma factor is associated with the core the holoenzyme is formed, which can initiate transcription.

The catalysed reaction is RNA(n) + a ribonucleoside 5'-triphosphate = RNA(n+1) + diphosphate. Promotes RNA polymerase assembly. Latches the N- and C-terminal regions of the beta' subunit thereby facilitating its interaction with the beta and alpha subunits. The protein is DNA-directed RNA polymerase subunit omega of Yersinia pestis bv. Antiqua (strain Antiqua).